We begin with the raw amino-acid sequence, 1159 residues long: ATP-dependent helicase/deoxyribonuclease subunit B (1159 aa).

A UvrD-like helicase ATP-binding domain is found at 1-275 (MEFNTYIGRA…TYFNTFYRYN (275 aa)). 8–15 (GRAGTGKS) contributes to the ATP binding site. A UvrD-like helicase C-terminal domain is found at 269–583 (NTFYRYNNDD…SIGTMDLAKV (315 aa)). [4Fe-4S] cluster is bound by residues C784, C1112, C1115, and C1121.

This sequence belongs to the helicase family. AddB/RexB type 1 subfamily. Heterodimer of AddA and AddB. Mg(2+) is required as a cofactor. The cofactor is [4Fe-4S] cluster.

In terms of biological role, the heterodimer acts as both an ATP-dependent DNA helicase and an ATP-dependent, dual-direction single-stranded exonuclease. Recognizes the chi site generating a DNA molecule suitable for the initiation of homologous recombination. The AddB subunit has 5' -&gt; 3' nuclease activity but not helicase activity. The chain is ATP-dependent helicase/deoxyribonuclease subunit B from Staphylococcus epidermidis (strain ATCC 35984 / DSM 28319 / BCRC 17069 / CCUG 31568 / BM 3577 / RP62A).